Reading from the N-terminus, the 1030-residue chain is Beta-galactosidase (1030 aa).

Positions 99 and 197 each coordinate substrate. Asp-197 lines the Na(+) pocket. Residues Glu-411, His-413, and Glu-456 each coordinate Mg(2+). Substrate-binding positions include Glu-456 and 532 to 535 (EYAH). Glu-456 acts as the Proton donor in catalysis. The Nucleophile role is filled by Glu-532. Residue Asn-592 participates in Mg(2+) binding. Phe-596 and Asn-599 together coordinate Na(+). 2 residues coordinate substrate: Asn-599 and Trp-1004.

Belongs to the glycosyl hydrolase 2 family. Homotetramer. Mg(2+) serves as cofactor. Requires Na(+) as cofactor.

It carries out the reaction Hydrolysis of terminal non-reducing beta-D-galactose residues in beta-D-galactosides.. This is Beta-galactosidase from Photobacterium profundum (strain SS9).